The following is a 210-amino-acid chain: ATP phosphoribosyltransferase (210 aa).

The protein belongs to the ATP phosphoribosyltransferase family. Short subfamily. In terms of assembly, heteromultimer composed of HisG and HisZ subunits.

It localises to the cytoplasm. The enzyme catalyses 1-(5-phospho-beta-D-ribosyl)-ATP + diphosphate = 5-phospho-alpha-D-ribose 1-diphosphate + ATP. Its pathway is amino-acid biosynthesis; L-histidine biosynthesis; L-histidine from 5-phospho-alpha-D-ribose 1-diphosphate: step 1/9. Functionally, catalyzes the condensation of ATP and 5-phosphoribose 1-diphosphate to form N'-(5'-phosphoribosyl)-ATP (PR-ATP). Has a crucial role in the pathway because the rate of histidine biosynthesis seems to be controlled primarily by regulation of HisG enzymatic activity. The protein is ATP phosphoribosyltransferase of Caldanaerobacter subterraneus subsp. tengcongensis (strain DSM 15242 / JCM 11007 / NBRC 100824 / MB4) (Thermoanaerobacter tengcongensis).